Consider the following 455-residue polypeptide: Bifunctional protein GlmU (455 aa).

The interval 1–226 (MSLDIVILAA…AMEVQGANDR (226 aa)) is pyrophosphorylase. UDP-N-acetyl-alpha-D-glucosamine is bound by residues 8 to 11 (LAAG), Lys22, Gln73, 78 to 79 (GT), 99 to 101 (YGD), Gly136, Glu151, Asn166, and Asn224. Asp101 serves as a coordination point for Mg(2+). Asn224 provides a ligand contact to Mg(2+). The tract at residues 227-247 (RQLSELERHYQLREGRRLMAQ) is linker. An N-acetyltransferase region spans residues 248–455 (GVTLRDPARF…WKRPEKIKKS (208 aa)). Residues Arg330 and Lys348 each contribute to the UDP-N-acetyl-alpha-D-glucosamine site. His360 functions as the Proton acceptor in the catalytic mechanism. Positions 363 and 374 each coordinate UDP-N-acetyl-alpha-D-glucosamine. Acetyl-CoA is bound by residues Ala377, 383 to 384 (NY), Ser402, Ala420, and Arg437.

The protein in the N-terminal section; belongs to the N-acetylglucosamine-1-phosphate uridyltransferase family. It in the C-terminal section; belongs to the transferase hexapeptide repeat family. Homotrimer. It depends on Mg(2+) as a cofactor.

It is found in the cytoplasm. The enzyme catalyses alpha-D-glucosamine 1-phosphate + acetyl-CoA = N-acetyl-alpha-D-glucosamine 1-phosphate + CoA + H(+). The catalysed reaction is N-acetyl-alpha-D-glucosamine 1-phosphate + UTP + H(+) = UDP-N-acetyl-alpha-D-glucosamine + diphosphate. It functions in the pathway nucleotide-sugar biosynthesis; UDP-N-acetyl-alpha-D-glucosamine biosynthesis; N-acetyl-alpha-D-glucosamine 1-phosphate from alpha-D-glucosamine 6-phosphate (route II): step 2/2. It participates in nucleotide-sugar biosynthesis; UDP-N-acetyl-alpha-D-glucosamine biosynthesis; UDP-N-acetyl-alpha-D-glucosamine from N-acetyl-alpha-D-glucosamine 1-phosphate: step 1/1. Its pathway is bacterial outer membrane biogenesis; LPS lipid A biosynthesis. Catalyzes the last two sequential reactions in the de novo biosynthetic pathway for UDP-N-acetylglucosamine (UDP-GlcNAc). The C-terminal domain catalyzes the transfer of acetyl group from acetyl coenzyme A to glucosamine-1-phosphate (GlcN-1-P) to produce N-acetylglucosamine-1-phosphate (GlcNAc-1-P), which is converted into UDP-GlcNAc by the transfer of uridine 5-monophosphate (from uridine 5-triphosphate), a reaction catalyzed by the N-terminal domain. The sequence is that of Bifunctional protein GlmU from Pseudomonas putida (strain ATCC 47054 / DSM 6125 / CFBP 8728 / NCIMB 11950 / KT2440).